Here is a 356-residue protein sequence, read N- to C-terminus: Heparan sulfate 2-O-sulfotransferase 1 (356 aa).

The Cytoplasmic portion of the chain corresponds to 1–11 (MGLLRIMMPPK). Residues 12-28 (LQLLAVVAFAVAMLFLE) form a helical; Signal-anchor for type II membrane protein membrane-spanning segment. Residues 24-51 (MLFLENQIQKLEESRAKLERAIARHEVR) adopt a coiled-coil conformation. Residues 29 to 356 (NQIQKLEESR…FYEKIYPKSN (328 aa)) are Lumenal-facing. Adenosine 3',5'-bisphosphate contacts are provided by Lys-83, Thr-84, Ala-85, Ser-86, Thr-87, and Ser-88. Residues Asn-108 and Asn-127 are each glycosylated (N-linked (GlcNAc...) asparagine). Active-site residues include His-140 and His-142. 2 residues coordinate adenosine 3',5'-bisphosphate: Arg-164 and Ser-172. Disulfide bonds link Cys-201–Cys-209 and Cys-222–Cys-228. Adenosine 3',5'-bisphosphate-binding residues include Tyr-279, Ser-285, Thr-290, and Lys-293.

The protein belongs to the sulfotransferase 3 family. Homotrimer. Interacts with the C5-epimerase GLCE. In terms of processing, N-glycosylated. In terms of tissue distribution, widely expressed. Expressed at higher level in lung and brain. Weakly expressed in spleen.

The protein localises to the golgi apparatus membrane. Functionally, catalyzes the transfer of a sulfo group from 3'-phospho-5'-adenylyl sulfate (PAPS) to the 2-OH position of iduronic acid (IdoA) or glucuronic acid (GlcA) within the heparan sulfate (HS) chain and participates in HS biosynthesis. Required for metanephric development of kidney formation, suggesting that 2-O-sulfation within HS is essential for signaling between ureteric bud and metanephric mesenchyme. This Mus musculus (Mouse) protein is Heparan sulfate 2-O-sulfotransferase 1.